An 811-amino-acid chain; its full sequence is Probable phosphoketolase (811 aa).

The protein belongs to the XFP family. It depends on thiamine diphosphate as a cofactor.

This Methylococcus capsulatus (strain ATCC 33009 / NCIMB 11132 / Bath) protein is Probable phosphoketolase.